The following is an 84-amino-acid chain: Tetrahydromethanopterin S-methyltransferase subunit G (84 aa).

Residues 50–70 (IGILYGLVIGIILSYILPALI) form a helical membrane-spanning segment.

The protein belongs to the MtrG family. As to quaternary structure, the complex is composed of 8 subunits; MtrA, MtrB, MtrC, MtrD, MtrE, MtrF, MtrG and MtrH.

It is found in the cell membrane. It carries out the reaction 5-methyl-5,6,7,8-tetrahydromethanopterin + coenzyme M + 2 Na(+)(in) = 5,6,7,8-tetrahydromethanopterin + methyl-coenzyme M + 2 Na(+)(out). The protein operates within one-carbon metabolism; methanogenesis from CO(2); methyl-coenzyme M from 5,10-methylene-5,6,7,8-tetrahydromethanopterin: step 2/2. In terms of biological role, part of a complex that catalyzes the formation of methyl-coenzyme M and tetrahydromethanopterin from coenzyme M and methyl-tetrahydromethanopterin. This is an energy-conserving, sodium-ion translocating step. The polypeptide is Tetrahydromethanopterin S-methyltransferase subunit G (Methanocaldococcus jannaschii (strain ATCC 43067 / DSM 2661 / JAL-1 / JCM 10045 / NBRC 100440) (Methanococcus jannaschii)).